Here is a 346-residue protein sequence, read N- to C-terminus: GTPase Obg (346 aa).

The region spanning 1–158 is the Obg domain; sequence MFIDKAKIYV…RWIELELKLL (158 aa). The OBG-type G domain maps to 159-330; it reads ADVGIIGFPN…LINLIRETRD (172 aa). GTP is bound by residues 165-172, 190-194, 212-215, 282-285, and 311-313; these read GFPNAGKS, FTTLT, DIPG, NKID, and SLI. The Mg(2+) site is built by Ser172 and Thr192.

It belongs to the TRAFAC class OBG-HflX-like GTPase superfamily. OBG GTPase family. As to quaternary structure, monomer. Requires Mg(2+) as cofactor.

The protein localises to the cytoplasm. Functionally, an essential GTPase which binds GTP, GDP and possibly (p)ppGpp with moderate affinity, with high nucleotide exchange rates and a fairly low GTP hydrolysis rate. Plays a role in control of the cell cycle, stress response, ribosome biogenesis and in those bacteria that undergo differentiation, in morphogenesis control. The polypeptide is GTPase Obg (Sulfurihydrogenibium sp. (strain YO3AOP1)).